Consider the following 307-residue polypeptide: Ribonuclease Z (307 aa).

Residues His63, His65, Asp67, His68, His141, Asp212, and His270 each coordinate Zn(2+). Asp67 acts as the Proton acceptor in catalysis.

This sequence belongs to the RNase Z family. In terms of assembly, homodimer. The cofactor is Zn(2+).

It carries out the reaction Endonucleolytic cleavage of RNA, removing extra 3' nucleotides from tRNA precursor, generating 3' termini of tRNAs. A 3'-hydroxy group is left at the tRNA terminus and a 5'-phosphoryl group is left at the trailer molecule.. Functionally, zinc phosphodiesterase, which displays some tRNA 3'-processing endonuclease activity. Probably involved in tRNA maturation, by removing a 3'-trailer from precursor tRNA. The chain is Ribonuclease Z from Bacillus cereus (strain B4264).